The following is a 310-amino-acid chain: MATEKSKILVIGGTGYIGKFLVEASAKAGHSTFALVREATLSDPVKGKTVQSFKDLGVTILHGDLNDHESLVKAIKQVDVVISTVGSMQILDQTKIISAIKEAGNVKRFLPSEFGVDVDRTSAVEPAKSAFAGKIQIRRTIEAEGIPYTYAVTGCFGGYYLPTLVQFEPGLTSPPRDKVTILGDGNAKAVINKEEDIAAYTIKAVDDPRTLNKILYIKPSNNTLSMNEIVTLWEKKIGKSLEKTHLPEEQLLKSIQESPIPINVVLSINHAVFVNGDTNISIEPSFGVEASELYPDVKYTSVDEYLSYFA.

NADP(+) is bound by residues 12-18 (GGTGYIG), arginine 37, and lysine 46. The active-site Proton acceptor is the lysine 134. NADP(+) is bound at residue arginine 138.

It belongs to the NmrA-type oxidoreductase family. Isoflavone reductase subfamily.

The protein resides in the cytoplasm. In Arabidopsis thaliana (Mouse-ear cress), this protein is Isoflavone reductase homolog P3.